The primary structure comprises 1606 residues: Phosphatidylinositol 3,4,5-trisphosphate-dependent Rac exchanger 2 protein (1606 aa).

Residues 23–214 enclose the DH domain; it reads LRVCVLSELQ…KAVCSNINEA (192 aa). The region spanning 245–361 is the PH domain; the sequence is EMLMCGVLLK…WFEAILKERE (117 aa). DEP domains follow at residues 390-464 and 491-566; these read CRQG…RFRY and SLFT…FFSD. PDZ domains follow at residues 592–671 and 677–754; these read KSLL…VLVS and TVKI…QDSI. A disordered region spans residues 1581–1606; that stretch reads GVRDRTPQSAPRLYKLCEPPPPAGEE.

Interacts with RAC1. As to expression, isoform 1 is highly expressed in skeletal muscle, heart and placenta, absent from peripheral blood leukocytes. Isoform 2 is expressed in skeletal muscle, kidney, small intestine, and placenta. Isoform 3 is expressed in the heart.

Functionally, functions as a RAC1 guanine nucleotide exchange factor (GEF), activating Rac proteins by exchanging bound GDP for free GTP. Its activity is synergistically activated by phosphatidylinositol 3,4,5-trisphosphate and the beta gamma subunits of heterotrimeric G protein. Mediates the activation of RAC1 in a PI3K-dependent manner. May be an important mediator of Rac signaling, acting directly downstream of both G protein-coupled receptors and phosphoinositide 3-kinase. The polypeptide is Phosphatidylinositol 3,4,5-trisphosphate-dependent Rac exchanger 2 protein (Homo sapiens (Human)).